The following is a 553-amino-acid chain: Arginine--tRNA ligase (553 aa).

Residues 130-140 carry the 'HIGH' region motif; the sequence is ANPTGDLHIGH.

The protein belongs to the class-I aminoacyl-tRNA synthetase family. Monomer.

It is found in the cytoplasm. It catalyses the reaction tRNA(Arg) + L-arginine + ATP = L-arginyl-tRNA(Arg) + AMP + diphosphate. The chain is Arginine--tRNA ligase from Staphylococcus aureus (strain USA300 / TCH1516).